A 206-amino-acid polypeptide reads, in one-letter code: MSRSKSSGRWLQEHFNDQYVKDSQKDGYRSRASYKLIELNDKDKLIKSGQTVVDLGAAPGGWSQVAAQIVGDGGRVVASDILPMDSLAGVDFVQGDFTEEAVLEQLLELLGEAKADLVISDMAPNMSGIADVDQPKSMYLVELALDMAKTTLKIGGSFACKVFQGEGFDELVLACRECFQKVLVRKPSASRPRSREVYIVAKGYKG.

The S-adenosyl-L-methionine site is built by glycine 60, tryptophan 62, aspartate 80, aspartate 96, and aspartate 121. Lysine 161 (proton acceptor) is an active-site residue.

The protein belongs to the class I-like SAM-binding methyltransferase superfamily. RNA methyltransferase RlmE family.

It is found in the cytoplasm. The enzyme catalyses uridine(2552) in 23S rRNA + S-adenosyl-L-methionine = 2'-O-methyluridine(2552) in 23S rRNA + S-adenosyl-L-homocysteine + H(+). Functionally, specifically methylates the uridine in position 2552 of 23S rRNA at the 2'-O position of the ribose in the fully assembled 50S ribosomal subunit. This chain is Ribosomal RNA large subunit methyltransferase E, found in Saccharophagus degradans (strain 2-40 / ATCC 43961 / DSM 17024).